Reading from the N-terminus, the 222-residue chain is MDHSQCLVTIYALMVFLGLRIDQGGCQHYLHIRPAPSENLPLVDLIEHPDPIYDPKEKDLNETLLRTLMVGHFDPNFMATILPEERLGVEDLGELDLLLRQKPSGAMPAEIKGLEFYEGLQSKKHRLSKKLRRKLQMWLWSQTFCPVLYTWNDLGTRFWPRYVKVGSCYSKRSCSVPEGMVCKAAKSMHLTILRWRCQRRVQQKCAWITIQYPVISECKCSC.

A signal peptide spans 1 to 19 (MDHSQCLVTIYALMVFLGL). N-linked (GlcNAc...) asparagine glycosylation occurs at asparagine 61. Disulfide bonds link cysteine 145/cysteine 182, cysteine 168/cysteine 218, cysteine 174/cysteine 220, and cysteine 197/cysteine 205.

The protein belongs to the noggin family. As to quaternary structure, homodimer.

Its subcellular location is the secreted. Its function is as follows. Patterns the embryo by interrupting bone morphogenetic proteins (BMP) signaling. Binds BMP-4 and BMP-2 with high affinity. Can abolish BMP-4 activity by blocking binding to cognate cell-surface receptors. Capable of inducing dorsal development in embryos. Causes dorsal mesodermal differentiation of animal cap ectoderm when coexpressed with xWNT-8 and nuclear, sequence-specific DNA-binding protein xBRA. None of these molecules causes dorsal mesoderm formation when expressed alone. This chain is Noggin (nog), found in Xenopus laevis (African clawed frog).